The primary structure comprises 888 residues: Pyruvate dehydrogenase E1 component (888 aa).

In terms of assembly, homodimer. Part of the PDH complex, consisting of multiple copies of pyruvate dehydrogenase (E1), dihydrolipoamide acetyltransferase (E2) and lipoamide dehydrogenase (E3). Thiamine diphosphate serves as cofactor.

The catalysed reaction is N(6)-[(R)-lipoyl]-L-lysyl-[protein] + pyruvate + H(+) = N(6)-[(R)-S(8)-acetyldihydrolipoyl]-L-lysyl-[protein] + CO2. Functionally, component of the pyruvate dehydrogenase (PDH) complex, that catalyzes the overall conversion of pyruvate to acetyl-CoA and CO(2). The polypeptide is Pyruvate dehydrogenase E1 component (aceE) (Buchnera aphidicola subsp. Schizaphis graminum (strain Sg)).